Here is a 140-residue protein sequence, read N- to C-terminus: ATP synthase epsilon chain (140 aa).

This sequence belongs to the ATPase epsilon chain family. As to quaternary structure, F-type ATPases have 2 components, CF(1) - the catalytic core - and CF(0) - the membrane proton channel. CF(1) has five subunits: alpha(3), beta(3), gamma(1), delta(1), epsilon(1). CF(0) has three main subunits: a, b and c.

Its subcellular location is the cell inner membrane. Functionally, produces ATP from ADP in the presence of a proton gradient across the membrane. The chain is ATP synthase epsilon chain from Xanthomonas campestris pv. campestris (strain 8004).